Reading from the N-terminus, the 88-residue chain is Small ribosomal subunit protein bS20 (88 aa).

Disordered stretches follow at residues 1-25 (MANSPQAKKRARQNERRFAINKARR) and 61-88 (GVTKGVMHKNTAARKMSRLSSRVKALGA).

This sequence belongs to the bacterial ribosomal protein bS20 family.

Binds directly to 16S ribosomal RNA. This chain is Small ribosomal subunit protein bS20, found in Jannaschia sp. (strain CCS1).